A 501-amino-acid chain; its full sequence is Glucose-6-phosphate exchanger SLC37A2 (501 aa).

Residues 19-39 (SWFRGFILLLTFLIYACYHMS) traverse the membrane as a helical segment. 3 N-linked (GlcNAc...) asparagine glycosylation sites follow: Asn-53, Asn-62, and Asn-68. A run of 5 helical transmembrane segments spans residues 88–108 (GAVD…SGIF), 118–140 (LSAG…FWNI), 142–164 (MLWY…WPSV), 179–199 (FIMG…SLIA), and 210–230 (SFIV…LFLI). Residues 240-252 (PPRHHDDPEKEQD) are compositionally biased toward basic and acidic residues. The tract at residues 240-266 (PPRHHDDPEKEQDNPEDPVNSPYSSRE) is disordered. 6 consecutive transmembrane segments (helical) span residues 303-323 (CLLF…LYIF), 334-354 (GDLS…AGLI), 362-382 (ATTC…YNYI), 391-411 (IVML…ITTA), 434-454 (AIID…AGLI), and 462-482 (VFYM…RLVY).

It belongs to the major facilitator superfamily. Organophosphate:Pi antiporter (OPA) (TC 2.A.1.4) family. As to expression, highly expressed in bone marrow derived macrophages, and weakly in spleen.

The protein localises to the endoplasmic reticulum membrane. It carries out the reaction D-glucose 6-phosphate(in) + phosphate(out) = D-glucose 6-phosphate(out) + phosphate(in). With respect to regulation, inhibited by vanadate but not by chlorogenic acid. Inorganic phosphate and glucose-6-phosphate antiporter. May transport cytoplasmic glucose-6-phosphate into the lumen of the endoplasmic reticulum and translocate inorganic phosphate into the opposite direction. Independent of a lumenal glucose-6-phosphatase. May not play a role in homeostatic regulation of blood glucose levels. This is Glucose-6-phosphate exchanger SLC37A2 from Mus musculus (Mouse).